A 358-amino-acid polypeptide reads, in one-letter code: 3-dehydroquinate synthase (358 aa).

Residues 70 to 75 (DGEQFK), 104 to 108 (GVIGD), 128 to 129 (TT), Lys141, Lys150, and 168 to 171 (CLHT) contribute to the NAD(+) site. Residues Glu183, His246, and His263 each coordinate Zn(2+).

It belongs to the sugar phosphate cyclases superfamily. Dehydroquinate synthase family. The cofactor is Co(2+). Zn(2+) is required as a cofactor. It depends on NAD(+) as a cofactor.

The protein localises to the cytoplasm. It carries out the reaction 7-phospho-2-dehydro-3-deoxy-D-arabino-heptonate = 3-dehydroquinate + phosphate. It functions in the pathway metabolic intermediate biosynthesis; chorismate biosynthesis; chorismate from D-erythrose 4-phosphate and phosphoenolpyruvate: step 2/7. Catalyzes the conversion of 3-deoxy-D-arabino-heptulosonate 7-phosphate (DAHP) to dehydroquinate (DHQ). The sequence is that of 3-dehydroquinate synthase from Shewanella baltica (strain OS185).